A 361-amino-acid polypeptide reads, in one-letter code: Chorismate synthase (361 aa).

Residues R48 and R54 each contribute to the NADP(+) site. FMN contacts are provided by residues 125-127 (RSS), 238-239 (NA), G278, 293-297 (KPTSS), and R319.

Belongs to the chorismate synthase family. As to quaternary structure, homotetramer. FMNH2 serves as cofactor.

The enzyme catalyses 5-O-(1-carboxyvinyl)-3-phosphoshikimate = chorismate + phosphate. It functions in the pathway metabolic intermediate biosynthesis; chorismate biosynthesis; chorismate from D-erythrose 4-phosphate and phosphoenolpyruvate: step 7/7. Catalyzes the anti-1,4-elimination of the C-3 phosphate and the C-6 proR hydrogen from 5-enolpyruvylshikimate-3-phosphate (EPSP) to yield chorismate, which is the branch point compound that serves as the starting substrate for the three terminal pathways of aromatic amino acid biosynthesis. This reaction introduces a second double bond into the aromatic ring system. This chain is Chorismate synthase, found in Vibrio vulnificus (strain CMCP6).